Reading from the N-terminus, the 62-residue chain is Large ribosomal subunit protein uL30 (62 aa).

This sequence belongs to the universal ribosomal protein uL30 family. Part of the 50S ribosomal subunit.

The chain is Large ribosomal subunit protein uL30 from Marinobacter nauticus (strain ATCC 700491 / DSM 11845 / VT8) (Marinobacter aquaeolei).